The primary structure comprises 389 residues: Alpha-(1,3)-fucosyltransferase 7 (389 aa).

Topologically, residues 1-55 are cytoplasmic; it reads MPTPCPPACLSTPGTHRLLPFPDWKAPSWESRKEATCNSSSPGPWAEPTVQGYHP. Residues 56–78 form a helical; Signal-anchor for type II membrane protein membrane-spanning segment; the sequence is TRRLRAWGGLAGGATFMVIWFFW. Over 79–389 the chain is Lumenal; the sequence is LWGSAPGSAP…YEDLESWFQA (311 aa). Cys115 and Cys123 are joined by a disulfide. Asn128 is a glycosylation site (N-linked (GlcNAc...) asparagine). A disulfide bridge links Cys258 with Cys261. An N-linked (GlcNAc...) asparagine glycan is attached at Asn338. A disulfide bridge links Cys365 with Cys368.

It belongs to the glycosyltransferase 10 family. Post-translationally, N-glycosylated. As to expression, highly expressed in lung and bone marrow and to a much lesser extent in spleen, salivary gland and skeletal muscle.

Its subcellular location is the golgi apparatus. It is found in the golgi stack membrane. It carries out the reaction an N-acetyl-alpha-neuraminyl-(2-&gt;3)-beta-D-galactosyl-(1-&gt;4)-N-acetyl-beta-D-glucosaminyl derivative + GDP-beta-L-fucose = an alpha-Neu5Ac-(2-&gt;3)-beta-D-Gal-(1-&gt;4)-[alpha-L-Fuc-(1-&gt;3)]-beta-D-GlcNAc derivative + GDP + H(+). The enzyme catalyses an alpha-Neu5Ac-(2-&gt;3)-beta-D-Gal-(1-&gt;4)-beta-D-GlcNAc6S derivative + GDP-beta-L-fucose = an alpha-Neu5Ac-(2-&gt;3)-beta-D-Gal-(1-&gt;4)-[alpha-L-Fuc-(1-&gt;3)]-beta-D-GlcNAc6S derivative + GDP + H(+). The catalysed reaction is a neolactoside IV(3)-alpha-NeuAc-nLc4Cer + GDP-beta-L-fucose = a neolactoside IV(3)-alpha-NeuNAc,III(3)-alpha-Fuc-nLc4Cer + GDP + H(+). It catalyses the reaction a neolactoside VI(3)-alpha-NeuNAc-nLc6Cer + GDP-beta-L-fucose = a neolactoside VI(3)-alpha-NeuAc,V(3)-alphaFuc-nLc6Cer + GDP + H(+). It carries out the reaction an alpha-Neu5Ac-(2-&gt;3)-beta-D-Gal-(1-&gt;4)-beta-D-GlcNAc-(1-&gt;3)-beta-D-Gal-(1-&gt;4)-[alpha-L-Fuc-(1-&gt;3)]-beta-D-GlcNAc derivative + GDP-beta-L-fucose = an alpha-Neu5Ac-(2-&gt;3)-beta-D-Gal-(1-&gt;4)-[alpha-L-Fuc-(1-&gt;3)]-beta-D-GlcNAc-(1-&gt;3)-beta-D-Gal-(1-&gt;4)-[alpha-L-Fuc-(1-&gt;3)]-beta-D-GlcNAc derivative + GDP + H(+). The enzyme catalyses alpha-Neu5Ac-(2-&gt;3)-beta-D-Gal-(1-&gt;4)-beta-D-GlcNAc-(1-&gt;3)-beta-D-Gal-(1-&gt;4)-D-Glc + GDP-beta-L-fucose = alpha-Neu5Ac-(2-&gt;3)-beta-D-Gal-(1-&gt;4)-[alpha-L-Fuc-(1-&gt;3)]-beta-D-GlcNAc-(1-&gt;3)-beta-D-Gal-(1-&gt;4)-D-Glc + GDP + H(+). The catalysed reaction is alpha-Neu5Ac-(2-&gt;3)-beta-D-Gal-(1-&gt;4)-beta-D-GlcNAc-(1-&gt;3)-beta-D-Gal-(1-&gt;4)-[alpha-L-Fuc-(1-&gt;3)]-beta-D-GlcNAc-(1-&gt;3)-beta-D-Gal-(1-&gt;4)-beta-D-GlcNAc + GDP-beta-L-fucose = alpha-Neu5Ac-(2-&gt;3)-beta-D-Gal-(1-&gt;4)-[alpha-L-Fuc-(1-&gt;3)]-beta-D-GlcNAc-(1-&gt;3)-beta-D-Gal-(1-&gt;4)-[alpha-L-Fuc-(1-&gt;3)]-beta-D-GlcNAc-(1-&gt;3)-beta-D-Gal-(1-&gt;4)-beta-D-GlcNAc + GDP + H(+). It catalyses the reaction alpha-Neu5Ac-(2-&gt;3)-beta-D-Gal-(1-&gt;4)-beta-D-GlcNAc-(1-&gt;3)-beta-D-Gal-(1-&gt;4)-beta-D-GlcNAc-(1-&gt;3)-beta-D-Gal-(1-&gt;4)-beta-D-GlcNAc + GDP-beta-L-fucose = alpha-Neu5Ac-(2-&gt;3)-beta-D-Gal-(1-&gt;4)-[alpha-L-Fuc-(1-&gt;3)]-beta-D-GlcNAc-(1-&gt;3)-beta-D-Gal-(1-&gt;4)-beta-D-GlcNAc-(1-&gt;3)-beta-D-Gal-(1-&gt;4)-beta-D-GlcNAc + GDP + H(+). The protein operates within protein modification; protein glycosylation. Its activity is regulated as follows. Inhibited by NaCl. Inhibited by GDP in a concentration dependent manner, with an IC(50) value of 93 uM. Also inhibited by GMP and GTP. Inhibited by N-ethylmaleimide. Activated by poly(ethylene glycol) by enhancing the thermal stability of FUT7. Activated by Mn2+, Ca2+, and Mg2+. Both panosialin A and B inhibit activity with IC(50) values of 4.8 and 5.3 ug/ml, respectively. Inhibited by gallic acid (GA) and (-)-epigallocatechin gallate (EGCG) in a time-dependent and irreversible manner with IC(50) values of 60 and 700 nM, respectively. In terms of biological role, catalyzes the transfer of L-fucose, from a guanosine diphosphate-beta-L-fucose, to the N-acetyl glucosamine (GlcNAc) of a distal alpha2,3 sialylated lactosamine unit of a glycoprotein or a glycolipid-linked sialopolylactosamines chain through an alpha-1,3 glycosidic linkage and participates in the final fucosylation step in the biosynthesis of the sialyl Lewis X (sLe(x)), a carbohydrate involved in cell and matrix adhesion during leukocyte trafficking and fertilization. In vitro, also synthesizes sialyl-dimeric-Lex structures, from VIM-2 structures and both di-fucosylated and trifucosylated structures from mono-fucosylated precursors. However does not catalyze alpha 1-3 fucosylation when an internal alpha 1-3 fucosylation is present in polylactosamine chain and the fucosylation rate of the internal GlcNAc residues is reduced once fucose has been added to the distal GlcNAc. Also catalyzes the transfer of a fucose from GDP-beta-fucose to the 6-sulfated a(2,3)sialylated substrate to produce 6-sulfo sLex mediating significant L-selectin-dependent cell adhesion. Through sialyl-Lewis(x) biosynthesis, can control SELE- and SELP-mediated cell adhesion with leukocytes and allows leukocytes tethering and rolling along the endothelial tissue thereby enabling the leukocytes to accumulate at a site of inflammation. May enhance embryo implantation through sialyl Lewis X (sLeX)-mediated adhesion of embryo cells to endometrium. May affect insulin signaling by up-regulating the phosphorylation and expression of some signaling molecules involved in the insulin-signaling pathway through SLe(x) which is present on the glycans of the INSRR alpha subunit. In Mus musculus (Mouse), this protein is Alpha-(1,3)-fucosyltransferase 7.